We begin with the raw amino-acid sequence, 1390 residues long: Hepatocyte growth factor receptor (1390 aa).

The signal sequence occupies residues M1 to G24. Topologically, residues E25–T932 are extracellular. Residues K27–L515 enclose the Sema domain. N-linked (GlcNAc...) asparagine glycosylation occurs at N45. 4 disulfides stabilise this stretch: C95-C101, C98-C160, C133-C141, and C172-C175. N106 carries an N-linked (GlcNAc...) asparagine glycan. N149 carries N-linked (GlcNAc...) asparagine glycosylation. N202 carries an N-linked (GlcNAc...) asparagine glycan. 2 disulfides stabilise this stretch: C298/C363 and C385/C397. Residues N399 and N405 are each glycosylated (N-linked (GlcNAc...) asparagine). Disulfide bonds link C520–C538, C526–C561, C529–C545, and C541–C551. IPT/TIG domains follow at residues P563–V655, P657–R739, and P742–V836. The O-linked (Man) threonine glycan is linked to T582. The N-linked (GlcNAc...) asparagine glycan is linked to N607. A disulfide bridge connects residues C610 and C624. N635 carries N-linked (GlcNAc...) asparagine glycosylation. Residue T676 is glycosylated (O-linked (Man) threonine). C697 and C709 are disulfide-bonded. O-linked (Man) threonine glycosylation is present at T761. Residues N785, N879, and N930 are each glycosylated (N-linked (GlcNAc...) asparagine). The chain crosses the membrane as a helical span at residues G933–L955. Topologically, residues K956–S1390 are cytoplasmic. S966 is subject to Phosphoserine. Phosphothreonine is present on T977. Phosphoserine is present on residues S990, S997, and S1000. Y1003 carries the post-translational modification Phosphotyrosine. The region spanning V1078–I1345 is the Protein kinase domain. ATP is bound by residues I1084–V1092 and K1110. D1204 acts as the Proton acceptor in catalysis. The segment at L1212–S1390 is interaction with RANBP9. Y1230 is subject to Phosphotyrosine. Y1234 and Y1235 each carry phosphotyrosine; by autocatalysis. A Phosphothreonine modification is found at T1289. The interaction with MUC20 stretch occupies residues W1320–V1359. Residues Y1349 and Y1356 each carry the phosphotyrosine; by autocatalysis modification. Y1365 is modified (phosphotyrosine).

Belongs to the protein kinase superfamily. Tyr protein kinase family. Heterodimer made of an alpha chain (50 kDa) and a beta chain (145 kDa) which are disulfide linked. Binds PLXNB1. Interacts when phosphorylated with downstream effectors including STAT3, PIK3R1, SRC, PCLG1, GRB2 and GAB1. Interacts with SPSB1, SPSB2 and SPSB4. Interacts with INPP5D/SHIP1. When phosphorylated at Tyr-1356, interacts with INPPL1/SHIP2. Interacts with RANBP9 and RANBP10, as well as SPSB1, SPSB2, SPSB3 and SPSB4. SPSB1 binding occurs in the presence and in the absence of HGF, however HGF treatment has a positive effect on this interaction. Interacts with MUC20; prevents interaction with GRB2 and suppresses hepatocyte growth factor-induced cell proliferation. Interacts with GRB10. Interacts with PTPN1 and PTPN2. Interacts with LECT2; this interaction may have an antagonistic effect on receptor activation. Interacts with HSP90AA1 and HSP90AB1; the interaction suppresses MET kinase activity. Interacts with tensin TNS3. Interacts (when phosphorylated) with tensin TNS4 (via SH2 domain); the interaction increases MET protein stability by inhibiting MET endocytosis and subsequent lysosomal degradation. In terms of assembly, (Microbial infection) Interacts via extracytoplasmic residues 25-656 with L.monocytogenes InlB; MET can bind HGF, its endogenous ligand, and InlB simultaneously. InlB probably dimerizes upon binding to MET, which encourages subsequent dimerization of MET. Autophosphorylated in response to ligand binding on Tyr-1234 and Tyr-1235 in the kinase domain leading to further phosphorylation of Tyr-1349 and Tyr-1356 in the C-terminal multifunctional docking site. Dephosphorylated by PTPRJ at Tyr-1349 and Tyr-1365. Dephosphorylated by PTPN1 and PTPN2. Post-translationally, ubiquitinated. Ubiquitination by CBL regulates MET endocytosis, resulting in decreasing plasma membrane receptor abundance, and in endosomal degradation and/or recycling of internalized receptors. In terms of processing, O-mannosylation of IPT/TIG domains by TMEM260 is required for protein maturation. O-mannosylated residues are composed of single mannose glycans that are not elongated or modified. (Microbial infection) Tyrosine phosphorylation is stimulated by L.monocytogenes InlB. Tyrosine phosphorylation is maximal 10-20 minutes after treatment with InlB and disappears by 60 minutes. The phosphorylated residues were not identified. In terms of tissue distribution, expressed in normal hepatocytes as well as in epithelial cells lining the stomach, the small and the large intestine. Found also in basal keratinocytes of esophagus and skin. High levels are found in liver, gastrointestinal tract, thyroid and kidney. Also present in the brain. Expressed in metaphyseal bone (at protein level).

Its subcellular location is the membrane. The protein localises to the secreted. It catalyses the reaction L-tyrosyl-[protein] + ATP = O-phospho-L-tyrosyl-[protein] + ADP + H(+). Its activity is regulated as follows. In its inactive state, the C-terminal tail interacts with the catalytic domain and inhibits the kinase activity. Upon ligand binding, the C-terminal tail is displaced and becomes phosphorylated, thus increasing the kinase activity. In terms of biological role, receptor tyrosine kinase that transduces signals from the extracellular matrix into the cytoplasm by binding to hepatocyte growth factor/HGF ligand. Regulates many physiological processes including proliferation, scattering, morphogenesis and survival. Ligand binding at the cell surface induces autophosphorylation of MET on its intracellular domain that provides docking sites for downstream signaling molecules. Following activation by ligand, interacts with the PI3-kinase subunit PIK3R1, PLCG1, SRC, GRB2, STAT3 or the adapter GAB1. Recruitment of these downstream effectors by MET leads to the activation of several signaling cascades including the RAS-ERK, PI3 kinase-AKT, or PLCgamma-PKC. The RAS-ERK activation is associated with the morphogenetic effects while PI3K/AKT coordinates prosurvival effects. During embryonic development, MET signaling plays a role in gastrulation, development and migration of neuronal precursors, angiogenesis and kidney formation. During skeletal muscle development, it is crucial for the migration of muscle progenitor cells and for the proliferation of secondary myoblasts. In adults, participates in wound healing as well as organ regeneration and tissue remodeling. Also promotes differentiation and proliferation of hematopoietic cells. May regulate cortical bone osteogenesis. (Microbial infection) Acts as a receptor for Listeria monocytogenes internalin InlB, mediating entry of the pathogen into cells. The chain is Hepatocyte growth factor receptor (MET) from Homo sapiens (Human).